Here is a 404-residue protein sequence, read N- to C-terminus: Serine/threonine transporter SstT (404 aa).

A run of 8 helical transmembrane segments spans residues 17 to 37, 39 to 59, 75 to 95, 138 to 158, 179 to 199, 212 to 232, 287 to 307, and 313 to 333; these read IGIG…LTGF, ILGK…VFAL, MTLI…VAVL, ALAT…GLAL, IVVW…FTTI, FLIL…NPLI, IPLG…VLTL, and FGIP…AVSA.

The protein belongs to the dicarboxylate/amino acid:cation symporter (DAACS) (TC 2.A.23) family.

The protein localises to the cell membrane. The enzyme catalyses L-serine(in) + Na(+)(in) = L-serine(out) + Na(+)(out). It carries out the reaction L-threonine(in) + Na(+)(in) = L-threonine(out) + Na(+)(out). Its function is as follows. Involved in the import of serine and threonine into the cell, with the concomitant import of sodium (symport system). The sequence is that of Serine/threonine transporter SstT from Streptococcus pyogenes serotype M2 (strain MGAS10270).